The following is a 598-amino-acid chain: Elongation factor 4 (598 aa).

Positions 5-187 constitute a tr-type G domain; it reads SHIRNFSIIA…RLVATIPAPT (183 aa). GTP-binding positions include 17-22 and 134-137; these read DHGKST and NKMD.

This sequence belongs to the TRAFAC class translation factor GTPase superfamily. Classic translation factor GTPase family. LepA subfamily.

The protein resides in the cell inner membrane. It carries out the reaction GTP + H2O = GDP + phosphate + H(+). Its function is as follows. Required for accurate and efficient protein synthesis under certain stress conditions. May act as a fidelity factor of the translation reaction, by catalyzing a one-codon backward translocation of tRNAs on improperly translocated ribosomes. Back-translocation proceeds from a post-translocation (POST) complex to a pre-translocation (PRE) complex, thus giving elongation factor G a second chance to translocate the tRNAs correctly. Binds to ribosomes in a GTP-dependent manner. In Pseudomonas syringae pv. syringae (strain B728a), this protein is Elongation factor 4.